Reading from the N-terminus, the 383-residue chain is Succinate--CoA ligase [ADP-forming] subunit beta (383 aa).

In terms of domain architecture, ATP-grasp spans 9–241 (KEVLHKFNVS…YDEEVKEEIE (233 aa)). Residues Lys-46, 53-55 (GRG), Glu-99, Ser-102, and Glu-107 contribute to the ATP site. Mg(2+) contacts are provided by Asn-196 and Asp-210. Substrate-binding positions include Asn-261 and 318 to 320 (GIM).

Belongs to the succinate/malate CoA ligase beta subunit family. As to quaternary structure, heterotetramer of two alpha and two beta subunits. The cofactor is Mg(2+).

The enzyme catalyses succinate + ATP + CoA = succinyl-CoA + ADP + phosphate. It carries out the reaction GTP + succinate + CoA = succinyl-CoA + GDP + phosphate. The protein operates within carbohydrate metabolism; tricarboxylic acid cycle; succinate from succinyl-CoA (ligase route): step 1/1. In terms of biological role, succinyl-CoA synthetase functions in the citric acid cycle (TCA), coupling the hydrolysis of succinyl-CoA to the synthesis of either ATP or GTP and thus represents the only step of substrate-level phosphorylation in the TCA. The beta subunit provides nucleotide specificity of the enzyme and binds the substrate succinate, while the binding sites for coenzyme A and phosphate are found in the alpha subunit. This chain is Succinate--CoA ligase [ADP-forming] subunit beta, found in Wolbachia sp. subsp. Drosophila simulans (strain wRi).